Reading from the N-terminus, the 65-residue chain is Putative antitoxin VapB7 (65 aa).

The protein belongs to the UPF0165 family.

Possibly the antitoxin component of a type II toxin-antitoxin (TA) system. Its cognate toxin is VapC7 (Potential). The polypeptide is Putative antitoxin VapB7 (vapB7) (Archaeoglobus fulgidus (strain ATCC 49558 / DSM 4304 / JCM 9628 / NBRC 100126 / VC-16)).